The primary structure comprises 154 residues: MVLTDAEWHLVLNIWAKVEADVAGHGQDILISLFKGHPETLEKFDKFKHLKTEAEMKASEDLKKHGNTVLTALGGILKKKGHHEAELKPLAQSHATKHKIPIKYLEFISDAIIHVLHSRHPADFGADAQAAMNKALELFRKDIAAKYKELGFQG.

The region spanning 2-148 (VLTDAEWHLV…FRKDIAAKYK (147 aa)) is the Globin domain. His-65 is a nitrite binding site. His-65 contributes to the O2 binding site. At Thr-68 the chain carries Phosphothreonine. His-94 serves as a coordination point for heme b.

Belongs to the globin family. In terms of assembly, monomeric.

Its subcellular location is the cytoplasm. It is found in the sarcoplasm. The enzyme catalyses Fe(III)-heme b-[protein] + nitric oxide + H2O = Fe(II)-heme b-[protein] + nitrite + 2 H(+). It carries out the reaction H2O2 + AH2 = A + 2 H2O. Monomeric heme protein which primary function is to store oxygen and facilitate its diffusion within muscle tissues. Reversibly binds oxygen through a pentacoordinated heme iron and enables its timely and efficient release as needed during periods of heightened demand. Depending on the oxidative conditions of tissues and cells, and in addition to its ability to bind oxygen, it also has a nitrite reductase activity whereby it regulates the production of bioactive nitric oxide. Under stress conditions, like hypoxia and anoxia, it also protects cells against reactive oxygen species thanks to its pseudoperoxidase activity. In Balaenoptera physalus (Fin whale), this protein is Myoglobin (MB).